We begin with the raw amino-acid sequence, 167 residues long: Lipoprotein signal peptidase (167 aa).

The next 4 membrane-spanning stretches (helical) occupy residues 8-28 (TFLTLLLLASIDWVSKLVVLL), 46-66 (WGHFSFLIIPSFNEGAAFGLF), 68-88 (QYKIPLLIFRVCVILGLALFL), and 101-121 (IALTLILAGALGNVGDILLHG). Catalysis depends on residues Asp-125 and Asp-143. Residues 139–159 (FNLADAFISIGTLLLIGHLYF) form a helical membrane-spanning segment.

Belongs to the peptidase A8 family.

It is found in the cell inner membrane. It carries out the reaction Release of signal peptides from bacterial membrane prolipoproteins. Hydrolyzes -Xaa-Yaa-Zaa-|-(S,diacylglyceryl)Cys-, in which Xaa is hydrophobic (preferably Leu), and Yaa (Ala or Ser) and Zaa (Gly or Ala) have small, neutral side chains.. It functions in the pathway protein modification; lipoprotein biosynthesis (signal peptide cleavage). Functionally, this protein specifically catalyzes the removal of signal peptides from prolipoproteins. This Chlamydia trachomatis serovar L2 (strain ATCC VR-902B / DSM 19102 / 434/Bu) protein is Lipoprotein signal peptidase.